The following is a 349-amino-acid chain: Putative phytanoyl-CoA dioxygenase (349 aa).

Residues lysine 118 and 169 to 171 (HLD) each bind 2-oxoglutarate. Residues histidine 169 and aspartate 171 each coordinate Fe cation.

It belongs to the PhyH family. Requires Fe cation as cofactor. The cofactor is L-ascorbate.

It catalyses the reaction phytanoyl-CoA + 2-oxoglutarate + O2 = 2-hydroxyphytanoyl-CoA + succinate + CO2. Its pathway is lipid metabolism; fatty acid metabolism. Its function is as follows. Converts phytanoyl-CoA to 2-hydroxyphytanoyl-CoA. In Dictyostelium discoideum (Social amoeba), this protein is Putative phytanoyl-CoA dioxygenase.